Consider the following 382-residue polypeptide: MSSDQLSKFLDRNKMEDNKRKVLDEEAKASLDIWKYVFGFADIAAAKCAIDLKIPEAIENHPSSQPVTLAELSSAVSASPSHLRRIMRFLVHQGIFKEIPTKDGLATGYVNTPLSRRLMITRRDGKSLAPFVLFETTPEMLAPWLRLSSVVSSPVNGSTPPPFDAVHGKDVWSFAQDNPFLSDMINEAMACDARRVVPRVAGACHGLFDGVTTMVDVGGGTGETMGMLVKEFPWIKGFNFDLPHVIEVAEVLDGVENVEGDMFDSIPACDAIFIKWVLHDWGDKDCIKILKNCKEAVPPNIGKVLIVESVIGENKKTMIVDERDEKLEHVRLMLDMVMMAHTSTGKERTLKEWDFVLKEAGFARYEVRDIDDVQSLIIAYRS.

Gly218, Asp241, Asp261, Met262, and Lys275 together coordinate S-adenosyl-L-homocysteine. His279 acts as the Proton acceptor in catalysis. Residues Glu308 and Glu347 contribute to the active site.

Belongs to the class I-like SAM-binding methyltransferase superfamily. Cation-independent O-methyltransferase family.

It is found in the cytoplasm. The enzyme catalyses N-acetylserotonin + S-adenosyl-L-methionine = melatonin + S-adenosyl-L-homocysteine + H(+). It participates in aromatic compound metabolism; melatonin biosynthesis; melatonin from serotonin: step 1/2. Functionally, methyltransferase which catalyzes the transfer of a methyl group onto N-acetylserotonin, producing melatonin (N-acetyl-5-methoxytryptamine). Does not seem to possess caffeate O-methyltransferase activity. Implicated in melatonin-dependent circadian dynamics of stomatal aperture to minimize night water loss and promote drought tolerance. Prevents seed germination by promoting melatonin biosynthesis. Promotes melatonin-triggered defense responses to the necrotrophic fungus Botrytis cinerea. Its function is as follows. (Microbial infection) Promotes melatonin-triggered defense responses to the necrotrophic fungus Botrytis cinerea. In Arabidopsis thaliana (Mouse-ear cress), this protein is Acetylserotonin O-methyltransferase.